Reading from the N-terminus, the 232-residue chain is Orotidine 5'-phosphate decarboxylase (232 aa).

Residues aspartate 11, lysine 33, 60 to 69 (DLKLYDIPNT), threonine 119, arginine 180, glutamine 189, glycine 209, and arginine 210 each bind substrate. The Proton donor role is filled by lysine 62.

Belongs to the OMP decarboxylase family. Type 1 subfamily. As to quaternary structure, homodimer.

The enzyme catalyses orotidine 5'-phosphate + H(+) = UMP + CO2. It functions in the pathway pyrimidine metabolism; UMP biosynthesis via de novo pathway; UMP from orotate: step 2/2. Catalyzes the decarboxylation of orotidine 5'-monophosphate (OMP) to uridine 5'-monophosphate (UMP). In Wigglesworthia glossinidia brevipalpis, this protein is Orotidine 5'-phosphate decarboxylase.